The following is a 497-amino-acid chain: ATP synthase subunit alpha, chloroplastic (497 aa).

Residue 170 to 177 coordinates ATP; that stretch reads GDRQTGKT.

It belongs to the ATPase alpha/beta chains family. F-type ATPases have 2 components, CF(1) - the catalytic core - and CF(0) - the membrane proton channel. CF(1) has five subunits: alpha(3), beta(3), gamma(1), delta(1), epsilon(1). CF(0) has four main subunits: a, b, b' and c.

It localises to the plastid. The protein localises to the chloroplast thylakoid membrane. It catalyses the reaction ATP + H2O + 4 H(+)(in) = ADP + phosphate + 5 H(+)(out). Its function is as follows. Produces ATP from ADP in the presence of a proton gradient across the membrane. The alpha chain is a regulatory subunit. The protein is ATP synthase subunit alpha, chloroplastic of Bigelowiella natans (Pedinomonas minutissima).